Consider the following 362-residue polypeptide: Putative F-box protein At3g23260 (362 aa).

Residues 1–46 (MEWRSLPVELQEEILSRVPAKYLARLRSTSKQWNALSKTGSFAKKH) form the F-box domain.

The chain is Putative F-box protein At3g23260 from Arabidopsis thaliana (Mouse-ear cress).